The primary structure comprises 224 residues: Mammalian ependymin-related protein 1 (224 aa).

Positions 1-37 (MLTRAPRRLVQGPRETWLLGGLWVWILCGLGMAGSPG) are cleaved as a signal peptide. 3 disulfide bridges follow: C42–C172, C88–C222, and C113–C210. N-linked (GlcNAc...) asparagine glycans are attached at residues N130 and N182.

This sequence belongs to the ependymin family. In terms of assembly, homodimer. In terms of processing, N-glycosylated; the glycan contains mannose-6-phosphate moieties. In terms of tissue distribution, detected in brain (at protein level).

The protein localises to the lysosome lumen. Its subcellular location is the secreted. Functionally, binds anionic lipids and gangliosides at acidic pH. In Rattus norvegicus (Rat), this protein is Mammalian ependymin-related protein 1 (Epdr1).